We begin with the raw amino-acid sequence, 238 residues long: Uridylate kinase (238 aa).

12 to 15 (KLSG) contributes to the ATP binding site. The segment at 20 to 25 (GDEGFG) is involved in allosteric activation by GTP. Position 54 (Gly54) interacts with UMP. 2 residues coordinate ATP: Gly55 and Arg59. UMP is bound by residues Asp74 and 135-142 (TGSPFFTT). Positions 162, 168, and 171 each coordinate ATP.

Belongs to the UMP kinase family. Homohexamer.

It is found in the cytoplasm. The catalysed reaction is UMP + ATP = UDP + ADP. It functions in the pathway pyrimidine metabolism; CTP biosynthesis via de novo pathway; UDP from UMP (UMPK route): step 1/1. Its activity is regulated as follows. Allosterically activated by GTP. Inhibited by UTP. Catalyzes the reversible phosphorylation of UMP to UDP. This is Uridylate kinase from Histophilus somni (strain 129Pt) (Haemophilus somnus).